We begin with the raw amino-acid sequence, 327 residues long: Methionyl-tRNA formyltransferase (327 aa).

121–124 provides a ligand contact to (6S)-5,6,7,8-tetrahydrofolate; sequence SLLP.

It belongs to the Fmt family.

It catalyses the reaction L-methionyl-tRNA(fMet) + (6R)-10-formyltetrahydrofolate = N-formyl-L-methionyl-tRNA(fMet) + (6S)-5,6,7,8-tetrahydrofolate + H(+). In terms of biological role, attaches a formyl group to the free amino group of methionyl-tRNA(fMet). The formyl group appears to play a dual role in the initiator identity of N-formylmethionyl-tRNA by promoting its recognition by IF2 and preventing the misappropriation of this tRNA by the elongation apparatus. This chain is Methionyl-tRNA formyltransferase, found in Paraburkholderia phymatum (strain DSM 17167 / CIP 108236 / LMG 21445 / STM815) (Burkholderia phymatum).